A 120-amino-acid chain; its full sequence is Large ribosomal subunit protein bL19 (120 aa).

The protein belongs to the bacterial ribosomal protein bL19 family.

In terms of biological role, this protein is located at the 30S-50S ribosomal subunit interface and may play a role in the structure and function of the aminoacyl-tRNA binding site. The polypeptide is Large ribosomal subunit protein bL19 (Picosynechococcus sp. (strain ATCC 27264 / PCC 7002 / PR-6) (Agmenellum quadruplicatum)).